The chain runs to 619 residues: Dihydroxy-acid dehydratase (619 aa).

Position 81 (Asp81) interacts with Mg(2+). Residue Cys122 coordinates [2Fe-2S] cluster. The Mg(2+) site is built by Asp123 and Lys124. Position 124 is an N6-carboxylysine (Lys124). Cys195 contacts [2Fe-2S] cluster. Position 491 (Glu491) interacts with Mg(2+). The active-site Proton acceptor is Ser517.

Belongs to the IlvD/Edd family. In terms of assembly, homodimer. [2Fe-2S] cluster serves as cofactor. Mg(2+) is required as a cofactor.

It catalyses the reaction (2R)-2,3-dihydroxy-3-methylbutanoate = 3-methyl-2-oxobutanoate + H2O. The catalysed reaction is (2R,3R)-2,3-dihydroxy-3-methylpentanoate = (S)-3-methyl-2-oxopentanoate + H2O. The protein operates within amino-acid biosynthesis; L-isoleucine biosynthesis; L-isoleucine from 2-oxobutanoate: step 3/4. It functions in the pathway amino-acid biosynthesis; L-valine biosynthesis; L-valine from pyruvate: step 3/4. Functionally, functions in the biosynthesis of branched-chain amino acids. Catalyzes the dehydration of (2R,3R)-2,3-dihydroxy-3-methylpentanoate (2,3-dihydroxy-3-methylvalerate) into 2-oxo-3-methylpentanoate (2-oxo-3-methylvalerate) and of (2R)-2,3-dihydroxy-3-methylbutanoate (2,3-dihydroxyisovalerate) into 2-oxo-3-methylbutanoate (2-oxoisovalerate), the penultimate precursor to L-isoleucine and L-valine, respectively. The protein is Dihydroxy-acid dehydratase of Rhodopseudomonas palustris (strain HaA2).